The chain runs to 433 residues: tRNA-2-methylthio-N(6)-dimethylallyladenosine synthase (433 aa).

The MTTase N-terminal domain maps to K3–A118. Positions 12, 49, 81, 150, 154, and 157 each coordinate [4Fe-4S] cluster. The Radical SAM core domain occupies S136–E369. The TRAM domain maps to Q372 to L433.

This sequence belongs to the methylthiotransferase family. MiaB subfamily. In terms of assembly, monomer. [4Fe-4S] cluster is required as a cofactor.

The protein localises to the cytoplasm. It carries out the reaction N(6)-dimethylallyladenosine(37) in tRNA + (sulfur carrier)-SH + AH2 + 2 S-adenosyl-L-methionine = 2-methylsulfanyl-N(6)-dimethylallyladenosine(37) in tRNA + (sulfur carrier)-H + 5'-deoxyadenosine + L-methionine + A + S-adenosyl-L-homocysteine + 2 H(+). Catalyzes the methylthiolation of N6-(dimethylallyl)adenosine (i(6)A), leading to the formation of 2-methylthio-N6-(dimethylallyl)adenosine (ms(2)i(6)A) at position 37 in tRNAs that read codons beginning with uridine. This Wolinella succinogenes (strain ATCC 29543 / DSM 1740 / CCUG 13145 / JCM 31913 / LMG 7466 / NCTC 11488 / FDC 602W) (Vibrio succinogenes) protein is tRNA-2-methylthio-N(6)-dimethylallyladenosine synthase.